Consider the following 192-residue polypeptide: Fe/S biogenesis protein NfuA (192 aa).

[4Fe-4S] cluster contacts are provided by C149 and C152.

The protein belongs to the NfuA family. In terms of assembly, homodimer. [4Fe-4S] cluster serves as cofactor.

Involved in iron-sulfur cluster biogenesis. Binds a 4Fe-4S cluster, can transfer this cluster to apoproteins, and thereby intervenes in the maturation of Fe/S proteins. Could also act as a scaffold/chaperone for damaged Fe/S proteins. The protein is Fe/S biogenesis protein NfuA of Aeromonas hydrophila subsp. hydrophila (strain ATCC 7966 / DSM 30187 / BCRC 13018 / CCUG 14551 / JCM 1027 / KCTC 2358 / NCIMB 9240 / NCTC 8049).